The chain runs to 200 residues: Recombination protein RecR (200 aa).

The C4-type zinc finger occupies 57 to 72 (CNECRTFTEEDVCHIC). A Toprim domain is found at 81-176 (GLLCVVESPA…DASRIAHGVP (96 aa)).

The protein belongs to the RecR family.

Functionally, may play a role in DNA repair. It seems to be involved in an RecBC-independent recombinational process of DNA repair. It may act with RecF and RecO. This is Recombination protein RecR from Vibrio vulnificus (strain CMCP6).